The primary structure comprises 351 residues: tRNA uridine(34) hydroxylase (351 aa).

The 95-residue stretch at 146 to 240 folds into the Rhodanese domain; it reads DDPQALFVDM…YARRAREQGL (95 aa). Cys-200 functions as the Cysteine persulfide intermediate in the catalytic mechanism.

It belongs to the TrhO family.

The catalysed reaction is uridine(34) in tRNA + AH2 + O2 = 5-hydroxyuridine(34) in tRNA + A + H2O. Functionally, catalyzes oxygen-dependent 5-hydroxyuridine (ho5U) modification at position 34 in tRNAs. The sequence is that of tRNA uridine(34) hydroxylase from Sodalis glossinidius (strain morsitans).